The following is a 450-amino-acid chain: Ribosomal protein uS12 methylthiotransferase RimO (450 aa).

The 111-residue stretch at 16–126 (PRISFVSLGC…VLDAVHQAVP (111 aa)) folds into the MTTase N-terminal domain. [4Fe-4S] cluster is bound by residues Cys25, Cys61, Cys90, Cys157, Cys161, and Cys164. Residues 143-380 (LTPRHYAYLK…MLKQQAISAR (238 aa)) form the Radical SAM core domain. The 67-residue stretch at 383 to 449 (KRKVGTRQQV…AYDLIGSAVG (67 aa)) folds into the TRAM domain.

This sequence belongs to the methylthiotransferase family. RimO subfamily. Requires [4Fe-4S] cluster as cofactor.

Its subcellular location is the cytoplasm. It catalyses the reaction L-aspartate(89)-[ribosomal protein uS12]-hydrogen + (sulfur carrier)-SH + AH2 + 2 S-adenosyl-L-methionine = 3-methylsulfanyl-L-aspartate(89)-[ribosomal protein uS12]-hydrogen + (sulfur carrier)-H + 5'-deoxyadenosine + L-methionine + A + S-adenosyl-L-homocysteine + 2 H(+). Catalyzes the methylthiolation of an aspartic acid residue of ribosomal protein uS12. This is Ribosomal protein uS12 methylthiotransferase RimO from Azorhizobium caulinodans (strain ATCC 43989 / DSM 5975 / JCM 20966 / LMG 6465 / NBRC 14845 / NCIMB 13405 / ORS 571).